Here is a 194-residue protein sequence, read N- to C-terminus: Ribosomal RNA large subunit methyltransferase E (194 aa).

Positions 48, 50, 66, 82, and 110 each coordinate S-adenosyl-L-methionine. Residue Lys-150 is the Proton acceptor of the active site.

The protein belongs to the class I-like SAM-binding methyltransferase superfamily. RNA methyltransferase RlmE family.

The protein resides in the cytoplasm. The enzyme catalyses uridine(2552) in 23S rRNA + S-adenosyl-L-methionine = 2'-O-methyluridine(2552) in 23S rRNA + S-adenosyl-L-homocysteine + H(+). Specifically methylates the uridine in position 2552 of 23S rRNA at the 2'-O position of the ribose in the fully assembled 50S ribosomal subunit. This is Ribosomal RNA large subunit methyltransferase E from Picrophilus torridus (strain ATCC 700027 / DSM 9790 / JCM 10055 / NBRC 100828 / KAW 2/3).